A 201-amino-acid polypeptide reads, in one-letter code: 3-isopropylmalate dehydratase small subunit (201 aa).

The protein belongs to the LeuD family. LeuD type 1 subfamily. Heterodimer of LeuC and LeuD.

The catalysed reaction is (2R,3S)-3-isopropylmalate = (2S)-2-isopropylmalate. Its pathway is amino-acid biosynthesis; L-leucine biosynthesis; L-leucine from 3-methyl-2-oxobutanoate: step 2/4. In terms of biological role, catalyzes the isomerization between 2-isopropylmalate and 3-isopropylmalate, via the formation of 2-isopropylmaleate. The polypeptide is 3-isopropylmalate dehydratase small subunit (Cytophaga hutchinsonii (strain ATCC 33406 / DSM 1761 / CIP 103989 / NBRC 15051 / NCIMB 9469 / D465)).